We begin with the raw amino-acid sequence, 774 residues long: Formin-like protein 13 (774 aa).

The signal sequence occupies residues 1–22 (MRRRVALSTAIALLVGAQLCVA). A compositionally biased stretch (pro residues) spans 51 to 67 (PPPPMSGSEAVPPPPPA). The segment at 51–78 (PPPPMSGSEAVPPPPPAAAASATTGGGR) is disordered. The segment covering 68 to 78 (AAASATTGGGR) has biased composition (low complexity). The helical transmembrane segment at 89 to 109 (IALSAGLVALAVASYSCCLLL) threads the bilayer. 4 disordered regions span residues 130–163 (AAAA…DAIY), 176–338 (HEKS…HLKP), 374–402 (FLNS…RRLL), and 740–774 (GSGK…SSSS). Residues 194–216 (DLRPLPPLKRPESQPPPPPPSTP) are compositionally biased toward pro residues. Over residues 242-261 (SSFSRSTSQHSTLEQTAMPP) the composition is skewed to low complexity. Over residues 262–286 (MAAPAPPQTNPPRPVRPPPPPPPPR) the composition is skewed to pro residues. The 424-residue stretch at 326 to 749 (GAARPPKPPH…GSGKSFRVPA (424 aa)) folds into the FH2 domain.

It belongs to the formin-like family. Class-I subfamily.

It is found in the membrane. The sequence is that of Formin-like protein 13 (FH13) from Oryza sativa subsp. japonica (Rice).